Here is a 236-residue protein sequence, read N- to C-terminus: MILLVSPKDVAEAYEAIEGGADIIDVKNPPEGSLGANFPWVIKETREATPEGMLVSAAIGDVPYKPGTVTLAALGATVSGADYIKVGLYGTRSYQEALDVMKNVTKAVKDAGENKIVVAAGYADAYRVGAVDPLVIPKVARDAGCDVAMLDTAVKDGKTLFDHMDLDLLREFVEETHKYGMKCALAGSIKIEEIPMLKEIGCDIVGVRGAACTQGDRNAGRIQKDLVKEIVKVCRD.

Lys-27 acts as the Schiff-base intermediate with substrate in catalysis. Residue Lys-85 is the Proton acceptor of the active site.

It belongs to the MfnB family.

It carries out the reaction 2 D-glyceraldehyde 3-phosphate = 4-(hydroxymethyl)-2-furancarboxaldehyde phosphate + phosphate + 2 H2O. It participates in cofactor biosynthesis; methanofuran biosynthesis. Its function is as follows. Catalyzes the formation of 4-(hydroxymethyl)-2-furancarboxaldehyde phosphate (4-HFC-P) from two molecules of glyceraldehyde-3-P (GA-3-P). The chain is (5-formylfuran-3-yl)methyl phosphate synthase from Methanococcus maripaludis (strain DSM 14266 / JCM 13030 / NBRC 101832 / S2 / LL).